Reading from the N-terminus, the 129-residue chain is MKKIIETQRAPGAIGPYVQGVDLGSMVFTSGQIPVCPQTGEIPADVQDQARLSLENVKAIVVAAGLSVGDIIKMTVFITDLNDFATINEVYKQFFDEHQATYPTRSCVQVARLPKDVKLEIEAIAVRSA.

Position 58 is an N6-(pyridoxal phosphate)lysine (K58). Residues 105-107 (RSC) and E120 each bind substrate.

It belongs to the RutC family. In terms of assembly, homotrimer.

The protein operates within amino-acid degradation; L-threonine degradation via propanoate pathway. In terms of biological role, may be a post-translational regulator that controls the metabolic fate of L-threonine or the potentially toxic intermediate 2-ketobutyrate. The sequence is that of Putative reactive intermediate deaminase TdcF (tdcF) from Escherichia coli O6:H1 (strain CFT073 / ATCC 700928 / UPEC).